The primary structure comprises 200 residues: Small ribosomal subunit protein uS4 (200 aa).

Positions 22–42 (TGKELEKRPYAPGPHGPNQRK) are disordered. In terms of domain architecture, S4 RNA-binding spans 92–152 (ARLDNLVYRM…EKSRNLAVIK (61 aa)).

This sequence belongs to the universal ribosomal protein uS4 family. As to quaternary structure, part of the 30S ribosomal subunit. Contacts protein S5. The interaction surface between S4 and S5 is involved in control of translational fidelity.

In terms of biological role, one of the primary rRNA binding proteins, it binds directly to 16S rRNA where it nucleates assembly of the body of the 30S subunit. Its function is as follows. With S5 and S12 plays an important role in translational accuracy. This Bacillus cytotoxicus (strain DSM 22905 / CIP 110041 / 391-98 / NVH 391-98) protein is Small ribosomal subunit protein uS4.